We begin with the raw amino-acid sequence, 655 residues long: Protein nipi-3 (655 aa).

The tract at residues 1–35 (MARTKCKTKTVANPRTGVRKTAKDLSEPVRQDAVS) is disordered. Residues 21–35 (TAKDLSEPVRQDAVS) are compositionally biased toward basic and acidic residues. In terms of domain architecture, Protein kinase spans 200–470 (IGIFVIYGTG…NQVNGDFPEI (271 aa)). Residues 206-214 (YGTGLVTRA) and Lys235 contribute to the ATP site.

It belongs to the protein kinase superfamily. CAMK Ser/Thr protein kinase family. May interact with transcription factor cebp-1 (via N-terminus). Expressed in epidermis, pharynx, intestine, a subset of head neurons and motoneurons.

The protein localises to the nucleus. Adapter protein that regulates different signaling pathways. Required for larval development and viability. Involved in negatively modulating pmk-1 p38/MAPK signaling. Involved in innate immunity, acting either in a manner dependent upon, or independent of, the pmk-1 or pmk-3 p38/MAPK pathways. Has a protective role in response to infection by the Gram-negative bacterium P.aeruginosa, acting by negatively modulating expression of cebp-1, and regulating the pmk-1 p38/MAPK pathway, leading to activation of transcription factor skn-1. Required to prevent P.aeruginosa toxin ToxA-mediated lethality, probably acting via modulating the effects of translational inhibition caused by the toxin. By regulating the up-regulation in the epidermis of antimicrobial peptides nlp-29 and nlp-31, plays a role in resistance to fungal infection. The protein is Protein nipi-3 of Caenorhabditis elegans.